The chain runs to 205 residues: Putative glutamine amidotransferase-like protein L716 (205 aa).

The Glutamine amidotransferase type-1 domain occupies M1 to A176. Catalysis depends on for GATase activity residues C82, H155, and D157.

The sequence is that of Putative glutamine amidotransferase-like protein L716 from Acanthamoeba polyphaga mimivirus (APMV).